Reading from the N-terminus, the 367-residue chain is Alcohol dehydrogenase 2 (367 aa).

Zn(2+) is bound by residues Cys48, His74, Cys107, Cys110, Cys113, Cys121, and Cys163. NAD(+) contacts are provided by residues 187-193 (GAGGGLG), Asp212, Lys216, 286-288 (VGI), and Arg361.

It belongs to the zinc-containing alcohol dehydrogenase family. In terms of assembly, homotetramer. The cofactor is Zn(2+).

The protein resides in the cytoplasm. The enzyme catalyses a primary alcohol + NAD(+) = an aldehyde + NADH + H(+). The catalysed reaction is a secondary alcohol + NAD(+) = a ketone + NADH + H(+). The chain is Alcohol dehydrogenase 2 (alcB) from Emericella nidulans (strain FGSC A4 / ATCC 38163 / CBS 112.46 / NRRL 194 / M139) (Aspergillus nidulans).